Reading from the N-terminus, the 286-residue chain is MSIISTKYLLQDAQANGYAVPAFNIHNAETIQAILEVCSEMRSPVILAGTPGTFKHIALEEIYALCSAYSTTYNMPLALHLDHHESLDDIRRKVHAGVRSAMIDGSHFPFDENVKLVKSVVDFCHSQDCSVEAELGRLGGVEDDMSVDAESAFLTDPQEAKRFVELTGVDSLAVAIGTAHGLYSKTPKIDFQRLAEIREVVDVPLVLHGASDVPDEFVRRTIELGVTKVNVATELKIAFAGAVKAWFAENPQGNDPRYYMRVGMDAMKEVVRNKINVCGSANRISA.

Aspartate 82 serves as the catalytic Proton donor. Zn(2+) is bound by residues histidine 83 and histidine 180. Position 181 (glycine 181) interacts with dihydroxyacetone phosphate. A Zn(2+)-binding site is contributed by histidine 208. Residues 209-211 and 230-233 each bind dihydroxyacetone phosphate; these read GAS and NVAT.

Belongs to the class II fructose-bisphosphate aldolase family. TagBP aldolase KbaY subfamily. Homotetramer. Forms a complex with KbaZ. The cofactor is Zn(2+).

The enzyme catalyses D-tagatofuranose 1,6-bisphosphate = D-glyceraldehyde 3-phosphate + dihydroxyacetone phosphate. It participates in carbohydrate metabolism; D-tagatose 6-phosphate degradation; D-glyceraldehyde 3-phosphate and glycerone phosphate from D-tagatose 6-phosphate: step 2/2. In terms of biological role, catalytic subunit of the tagatose-1,6-bisphosphate aldolase KbaYZ, which catalyzes the reversible aldol condensation of dihydroxyacetone phosphate (DHAP or glycerone-phosphate) with glyceraldehyde 3-phosphate (G3P) to produce tagatose 1,6-bisphosphate (TBP). Requires KbaZ subunit for full activity and stability. This is D-tagatose-1,6-bisphosphate aldolase subunit KbaY from Escherichia coli O17:K52:H18 (strain UMN026 / ExPEC).